A 222-amino-acid chain; its full sequence is 2-C-methyl-D-erythritol 4-phosphate cytidylyltransferase (222 aa).

The protein belongs to the IspD/TarI cytidylyltransferase family. IspD subfamily.

The catalysed reaction is 2-C-methyl-D-erythritol 4-phosphate + CTP + H(+) = 4-CDP-2-C-methyl-D-erythritol + diphosphate. Its pathway is isoprenoid biosynthesis; isopentenyl diphosphate biosynthesis via DXP pathway; isopentenyl diphosphate from 1-deoxy-D-xylulose 5-phosphate: step 2/6. Functionally, catalyzes the formation of 4-diphosphocytidyl-2-C-methyl-D-erythritol from CTP and 2-C-methyl-D-erythritol 4-phosphate (MEP). This is 2-C-methyl-D-erythritol 4-phosphate cytidylyltransferase from Thermotoga petrophila (strain ATCC BAA-488 / DSM 13995 / JCM 10881 / RKU-1).